Reading from the N-terminus, the 88-residue chain is Small ribosomal subunit protein uS15c (88 aa).

The protein belongs to the universal ribosomal protein uS15 family. In terms of assembly, part of the 30S ribosomal subunit.

It localises to the plastid. Its subcellular location is the chloroplast. This Pinus thunbergii (Japanese black pine) protein is Small ribosomal subunit protein uS15c (rps15).